The following is a 161-amino-acid chain: HMG1/2-like protein (161 aa).

Disordered stretches follow at residues 1–46 (MKGA…KRAP), 60–91 (FKQKNPKNKSVAAVGKAAGERWKSLSESEKAP), and 113–161 (GESA…DDDE). Composition is skewed to basic and acidic residues over residues 10–27 (AKADAKLAVKSKGAEKPA) and 77–89 (AGERWKSLSESEK). A DNA-binding region (HMG box) is located at residues 42–111 (PKRAPSAFFV…EYNKAIAAYN (70 aa)). Low complexity predominate over residues 114 to 123 (ESAAAAAPKK). A compositionally biased stretch (acidic residues) spans 145-161 (NDDDDDEGSDEDEDDDE).

The protein belongs to the HMGB family.

It localises to the nucleus. The sequence is that of HMG1/2-like protein from Triticum aestivum (Wheat).